The chain runs to 493 residues: C2H2-type transcription factor ffmA (493 aa).

Over residues methionine 1–histidine 18 the composition is skewed to low complexity. 3 disordered regions span residues methionine 1–proline 50, threonine 68–glycine 140, and glutamate 164–threonine 202. Composition is skewed to polar residues over residues threonine 69–leucine 79 and asparagine 192–threonine 202. A C2H2-type 1 zinc finger spans residues phenylalanine 212 to histidine 234. Residues tyrosine 240–arginine 265 form a C2H2-type 2; degenerate zinc finger. 2 stretches are compositionally biased toward polar residues: residues glutamine 288 to proline 307 and alanine 484 to lysine 493. 2 disordered regions span residues glutamine 288–phenylalanine 316 and threonine 468–lysine 493.

This sequence belongs to the krueppel C2H2-type zinc-finger protein family.

The protein localises to the nucleus. Transcription factor that acts in coordination with atrR to regulate the expression of the ABC-type multidrug transporter abcG1 and thus plays a role in azole susceptibility. Regulates the expression of genes involved in fermentation. Is able to promote expression from the yeast FLO11 promoter. The sequence is that of C2H2-type transcription factor ffmA from Aspergillus fumigatus (strain CBS 144.89 / FGSC A1163 / CEA10) (Neosartorya fumigata).